The primary structure comprises 348 residues: UDP-glucose 4-epimerase (348 aa).

NAD(+) is bound by residues 12–14 (GYI), 33–37 (DNFHN), 66–67 (DI), F88, and K92. 132–134 (SAT) is a substrate binding site. Y157 acts as the Proton acceptor in catalysis. K161 and Y185 together coordinate NAD(+). Substrate-binding positions include 185–187 (YFN), 206–208 (NNL), 224–226 (NVF), R239, and 300–303 (REGD).

This sequence belongs to the NAD(P)-dependent epimerase/dehydratase family. In terms of assembly, homodimer. NAD(+) is required as a cofactor.

The enzyme catalyses UDP-alpha-D-glucose = UDP-alpha-D-galactose. It catalyses the reaction UDP-N-acetyl-alpha-D-glucosamine = UDP-N-acetyl-alpha-D-galactosamine. It functions in the pathway carbohydrate metabolism; galactose metabolism. In terms of biological role, catalyzes two distinct but analogous reactions: the reversible epimerization of UDP-glucose to UDP-galactose and the reversible epimerization of UDP-N-acetylglucosamine to UDP-N-acetylgalactosamine. The reaction with UDP-Gal plays a critical role in the Leloir pathway of galactose catabolism in which galactose is converted to the glycolytic intermediate glucose 6-phosphate. It contributes to the catabolism of dietary galactose and enables the endogenous biosynthesis of both UDP-Gal and UDP-GalNAc when exogenous sources are limited. Both UDP-sugar interconversions are important in the synthesis of glycoproteins and glycolipids. This chain is UDP-glucose 4-epimerase, found in Bos taurus (Bovine).